The primary structure comprises 834 residues: MGLFEKIFGTYSSREIKKIIPIINKIDSYEEEFKKLTDEELRNKTDEFKDMLAKGKTLDDILPEAFAVAREASARVLGMRHFREQLIGGIVLHQGRISEMKTGEGKTLVATLPAYLNALSGKGVHVITVNDYLAKRDRDQMSQLYGFLGLTTGVIVHDLDNEQRREAYNCDITYGTNNEFGFDYLRDNMVIYKEERVQRKLNFCIVDEVDSILIDEARTPLIISGEGDNSTDFYKVADFFAKTLKEDDYTVDEKTNSVILTEQGIEKAEKFFHIDNYGDGDNMQIQHHVVQALKANYTMKRDKDYMVKDNEVIIVDEFTGRLMEGRRYSDGLHQAIEAKENVKIQKESKTLATITFQNYFRMYTKLSGMTGTAQTEEAEFREIYGLDVIVIPTHRPIARIDAPDVVYKSEKAKFKAIVNEIAETYKKQQPVLVGTVSIEKSELLSDMLKRKGVPHQVLNAKYHEKEAEIISHAGEKGMVTIATNMAGRGTDIKLGEGVEEVGGLKVIGTERHESRRIDNQLRGRSGRQGDPGYSRFYVSLEDDLMRIFASDRLQGVVEKLGLTDEDAIESRMVSNAIENAQKKVEGNNFDVRKSVLQYDDVMNQQREVIYKQRSQVLEGESLKEDIQEMIRSVISEAVDAHMSGLDETLEEDLEKLLAYLQEIYLPKNVVTVDELKIKSDDEIKEILIDIAEKMYSEKEEEVTPERMREIESVILLRIVDTKWMDHIDNMDHLRQGMGLRAYRQQDPVQAYQFEGSEMFDEMINGIKTDTVKYLFHIQVEKNIERERVARETSTNINDGEGGSHEPIKRKEEKIGRNDLCPCGSGKKYKNCCGR.

ATP contacts are provided by residues Gln-85, 103–107 (GEGKT), and Asp-491. The interval 790 to 809 (RETSTNINDGEGGSHEPIKR) is disordered. Residues Cys-820, Cys-822, Cys-831, and Cys-832 each contribute to the Zn(2+) site.

This sequence belongs to the SecA family. Monomer and homodimer. Part of the essential Sec protein translocation apparatus which comprises SecA, SecYEG and auxiliary proteins SecDF. Other proteins may also be involved. Requires Zn(2+) as cofactor.

The protein localises to the cell membrane. The protein resides in the cytoplasm. It carries out the reaction ATP + H2O + cellular proteinSide 1 = ADP + phosphate + cellular proteinSide 2.. In terms of biological role, part of the Sec protein translocase complex. Interacts with the SecYEG preprotein conducting channel. Has a central role in coupling the hydrolysis of ATP to the transfer of proteins into and across the cell membrane, serving as an ATP-driven molecular motor driving the stepwise translocation of polypeptide chains across the membrane. The sequence is that of Protein translocase subunit SecA from Clostridium novyi (strain NT).